Here is a 593-residue protein sequence, read N- to C-terminus: Insulin-like growth factor 2 mRNA-binding protein 3-B (593 aa).

RRM domains follow at residues 2–75 (NKLY…HSVP) and 81–156 (RKLQ…YIPD). The disordered stretch occupies residues 159–208 (ATPQSPSQQLQQPQQQHPQGRRGFGQRGPARQGSPGAAARPKPQSEVPLR). Residues 161 to 176 (PQSPSQQLQQPQQQHP) are compositionally biased toward low complexity. 2 KH domains span residues 204–269 (EVPL…CKII) and 285–352 (EIPL…EEEV). Residues 390-402 (SGMPPPSAGVSSP) are compositionally biased toward low complexity. The disordered stretch occupies residues 390-412 (SGMPPPSAGVSSPTTSASYPPFG). KH domains follow at residues 417–482 (SETV…QGRI) and 499–565 (KLEA…QRKI). Residues 571-593 (QVRRQQQQQQKTAQSGQPQPRRK) form a disordered region.

It belongs to the RRM IMP/VICKZ family. Homodimer and multimer. Associates with microtubules. Interaction with a translocation machinery protein TRAPA of the endoplasmic reticulum. Component of a mRNP complex, at least composed of DAZAP1, IGF2BP3, STAU and VgRBP60. The mRNP complex with DAZAP1, IGF2BP3, STAU and VgRBP60 is only found in the cytoplasm. Interacts with a hnRNP 1 related RNA transport protein VgRBP60 both in the nucleus (in an RNA-independent manner) and the cytoplasm (in an RNA-dependent manner). Found in a B3 activator complex. Expressed in oocytes, kidney and pancreas (at protein level). Expressed in oocytes, kidney and pancreas.

The protein localises to the nucleus. It localises to the cytoplasm. The protein resides in the endoplasmic reticulum. RNA-binding protein that acts as a regulator of mRNA transport and localization. Binds to the RNA sequence motif 5'-UUCAC-3'. Preferentially binds to N6-methyladenosine (m6A)-containing mRNAs and increases their stability. Mediates the specific association of Vg1 RNA to microtubules. May regulate mRNA translation. Binds specifically to the vegetal localization elements (VLE or VgLE) in the 3'-UTR of Vg1 and VegT mRNAs. Binds to the Vg1 and VegT mRNAs in both the nucleus and the cytoplasm. May regulate mRNA translation. Acts as a transcription regulator. Binds to the 5'-[TA]GGTTACT-3' motif within element 3 of the TFIIIA gene promoter. The polypeptide is Insulin-like growth factor 2 mRNA-binding protein 3-B (igf2bp3-b) (Xenopus laevis (African clawed frog)).